A 466-amino-acid chain; its full sequence is Argininosuccinate lyase 1 (466 aa).

It belongs to the lyase 1 family. Argininosuccinate lyase subfamily.

It localises to the cytoplasm. The enzyme catalyses 2-(N(omega)-L-arginino)succinate = fumarate + L-arginine. It participates in amino-acid biosynthesis; L-arginine biosynthesis; L-arginine from L-ornithine and carbamoyl phosphate: step 3/3. In Agrobacterium fabrum (strain C58 / ATCC 33970) (Agrobacterium tumefaciens (strain C58)), this protein is Argininosuccinate lyase 1.